Consider the following 142-residue polypeptide: Large ribosomal subunit protein uL11 (142 aa).

The protein belongs to the universal ribosomal protein uL11 family. Part of the ribosomal stalk of the 50S ribosomal subunit. Interacts with L10 and the large rRNA to form the base of the stalk. L10 forms an elongated spine to which L12 dimers bind in a sequential fashion forming a multimeric L10(L12)X complex. Post-translationally, one or more lysine residues are methylated.

In terms of biological role, forms part of the ribosomal stalk which helps the ribosome interact with GTP-bound translation factors. This Vibrio vulnificus (strain YJ016) protein is Large ribosomal subunit protein uL11.